Reading from the N-terminus, the 331-residue chain is Coiled-coil domain-containing protein 92 (331 aa).

Coiled-coil stretches lie at residues 18 to 44 (MAAT…HAST) and 76 to 152 (DGTS…EQRA). A compositionally biased stretch (low complexity) spans 171–184 (SSSGTSDASPSGSP). The disordered stretch occupies residues 171–212 (SSSGTSDASPSGSPVLASYKPAPPKDKLPETPRRRMKKSLSA). Residues 193-203 (PPKDKLPETPR) are compositionally biased toward basic and acidic residues. Residue S209 is modified to Phosphoserine.

Interacts with CEP164. In terms of assembly, (Microbial infection) Interacts with ebolavirus protein NP; this interaction sequesters NP in the cytoplasm. In terms of processing, phosphorylated at Ser-209 by TTBK2.

It is found in the cytoplasm. The protein localises to the cytoskeleton. The protein resides in the microtubule organizing center. Its subcellular location is the centrosome. It localises to the centriole. In terms of biological role, interferon-stimulated protein that plays a role in innate immunity. Strongly inhibits ebolavirus transcription and replication. Forms a complex with viral RNA-bound nucleocapsid NP and thereby prevents the transport of NP to the cell surface. This is Coiled-coil domain-containing protein 92 (CCDC92) from Homo sapiens (Human).